Here is a 130-residue protein sequence, read N- to C-terminus: Probable 4-amino-4-deoxy-L-arabinose-phosphoundecaprenol flippase subunit ArnF (130 aa).

Topologically, residues 1–4 are cytoplasmic; that stretch reads MGYG. The chain crosses the membrane as a helical span at residues 5–25; the sequence is WALFSVALVSAAQLLLKWVMM. Topologically, residues 26-44 are periplasmic; sequence HLPPLGALRLWLDPAYAEP. A helical membrane pass occupies residues 45–65; sequence LALLMGGLLAYVCSMGCWFMA. At 66-74 the chain is on the cytoplasmic side; it reads LRRLPLNKA. Residues 75 to 95 form a helical membrane-spanning segment; sequence YPLLSLSYVLVAACALMIPEF. Over 96–103 the chain is Periplasmic; that stretch reads NERFTFSR. Residues 104–124 form a helical membrane-spanning segment; that stretch reads LMGVALICGGLLLICLPAGGK. The Cytoplasmic portion of the chain corresponds to 125–130; it reads GDTPRR.

Belongs to the ArnF family. As to quaternary structure, heterodimer of ArnE and ArnF.

The protein localises to the cell inner membrane. Its pathway is bacterial outer membrane biogenesis; lipopolysaccharide biosynthesis. In terms of biological role, translocates 4-amino-4-deoxy-L-arabinose-phosphoundecaprenol (alpha-L-Ara4N-phosphoundecaprenol) from the cytoplasmic to the periplasmic side of the inner membrane. In Sodalis glossinidius (strain morsitans), this protein is Probable 4-amino-4-deoxy-L-arabinose-phosphoundecaprenol flippase subunit ArnF.